A 294-amino-acid polypeptide reads, in one-letter code: Nucleotide-binding protein Maqu_2718 (294 aa).

8–15 serves as a coordination point for ATP; that stretch reads GRSGSGKS. Position 61–64 (61–64) interacts with GTP; the sequence is DARN.

This sequence belongs to the RapZ-like family.

In terms of biological role, displays ATPase and GTPase activities. The chain is Nucleotide-binding protein Maqu_2718 from Marinobacter nauticus (strain ATCC 700491 / DSM 11845 / VT8) (Marinobacter aquaeolei).